Consider the following 303-residue polypeptide: Sulfate adenylyltransferase subunit 2 (303 aa).

The tract at residues Arg-281–Phe-303 is disordered.

Belongs to the PAPS reductase family. CysD subfamily. Heterodimer composed of CysD, the smaller subunit, and CysN.

It catalyses the reaction sulfate + ATP + H(+) = adenosine 5'-phosphosulfate + diphosphate. It functions in the pathway sulfur metabolism; hydrogen sulfide biosynthesis; sulfite from sulfate: step 1/3. In terms of biological role, with CysN forms the ATP sulfurylase (ATPS) that catalyzes the adenylation of sulfate producing adenosine 5'-phosphosulfate (APS) and diphosphate, the first enzymatic step in sulfur assimilation pathway. APS synthesis involves the formation of a high-energy phosphoric-sulfuric acid anhydride bond driven by GTP hydrolysis by CysN coupled to ATP hydrolysis by CysD. The sequence is that of Sulfate adenylyltransferase subunit 2 from Saccharophagus degradans (strain 2-40 / ATCC 43961 / DSM 17024).